A 406-amino-acid polypeptide reads, in one-letter code: Imidazolonepropionase (406 aa).

Fe(3+) contacts are provided by His-72 and His-74. Positions 72 and 74 each coordinate Zn(2+). Arg-81, Tyr-144, and His-177 together coordinate 4-imidazolone-5-propanoate. Tyr-144 serves as a coordination point for N-formimidoyl-L-glutamate. His-242 serves as a coordination point for Fe(3+). His-242 contacts Zn(2+). Gln-245 is a binding site for 4-imidazolone-5-propanoate. Residue Asp-317 coordinates Fe(3+). Asp-317 serves as a coordination point for Zn(2+). The N-formimidoyl-L-glutamate site is built by Asn-319 and Gly-321. Residue Thr-322 participates in 4-imidazolone-5-propanoate binding.

The protein belongs to the metallo-dependent hydrolases superfamily. HutI family. The cofactor is Zn(2+). Fe(3+) serves as cofactor.

It localises to the cytoplasm. The catalysed reaction is 4-imidazolone-5-propanoate + H2O = N-formimidoyl-L-glutamate. It participates in amino-acid degradation; L-histidine degradation into L-glutamate; N-formimidoyl-L-glutamate from L-histidine: step 3/3. Its function is as follows. Catalyzes the hydrolytic cleavage of the carbon-nitrogen bond in imidazolone-5-propanoate to yield N-formimidoyl-L-glutamate. It is the third step in the universal histidine degradation pathway. This is Imidazolonepropionase from Yersinia pestis bv. Antiqua (strain Antiqua).